A 144-amino-acid polypeptide reads, in one-letter code: Large ribosomal subunit protein uL11 (144 aa).

Belongs to the universal ribosomal protein uL11 family. Part of the ribosomal stalk of the 50S ribosomal subunit. Interacts with L10 and the large rRNA to form the base of the stalk. L10 forms an elongated spine to which L12 dimers bind in a sequential fashion forming a multimeric L10(L12)X complex. Post-translationally, one or more lysine residues are methylated.

Its function is as follows. Forms part of the ribosomal stalk which helps the ribosome interact with GTP-bound translation factors. This is Large ribosomal subunit protein uL11 from Neisseria meningitidis serogroup C (strain 053442).